Consider the following 718-residue polypeptide: Pullulanase (718 aa).

Asp-406 (nucleophile) is an active-site residue. The Proton donor role is filled by Glu-435.

It belongs to the glycosyl hydrolase 13 family.

The catalysed reaction is Hydrolysis of (1-&gt;6)-alpha-D-glucosidic linkages in pullulan, amylopectin and glycogen, and in the alpha- and beta-limit dextrins of amylopectin and glycogen.. The polypeptide is Pullulanase (amyX) (Bacillus subtilis (strain 168)).